Here is a 748-residue protein sequence, read N- to C-terminus: Disintegrin and metalloproteinase domain-containing protein 10 (748 aa).

The N-terminal stretch at 1-19 (MVLLRVLILLLSWAAGMGG) is a signal peptide. Positions 20-213 (QYGNPLNKYI…NGPELLRKKR (194 aa)) are excised as a propeptide. The Extracellular portion of the chain corresponds to 20-672 (QYGNPLNKYI…SPELYENIAE (653 aa)). The Cysteine switch signature appears at 171–178 (GGCADHSV). A Zn(2+)-binding site is contributed by Cys173. The region spanning 220 to 456 (NTCQLYIQTD…KRNNCFVESG (237 aa)) is the Peptidase M12B domain. Intrachain disulfides connect Cys222–Cys313, Cys344–Cys451, Cys399–Cys435, Cys460–Cys495, Cys471–Cys484, Cys473–Cys479, Cys483–Cys515, Cys503–Cys511, Cys510–Cys536, Cys524–Cys543, Cys530–Cys562, Cys555–Cys567, Cys572–Cys598, Cys580–Cys607, Cys582–Cys597, Cys594–Cys639, and Cys632–Cys645. 2 N-linked (GlcNAc...) asparagine glycosylation sites follow: Asn267 and Asn278. Residue His383 coordinates Zn(2+). Glu384 is a catalytic residue. Residues His387 and His393 each coordinate Zn(2+). Asn439 carries an N-linked (GlcNAc...) asparagine glycan. A Disintegrin domain is found at 457–551 (QPICGNGMVE…LCPASDPKPN (95 aa)). Asn551 carries N-linked (GlcNAc...) asparagine glycosylation. Residues 673 to 693 (WIVAHWWAVLLMGIALIMLMA) form a helical membrane-spanning segment. At 694 to 748 (GFIKICSVHTPSSNPKLPPPKPLPGTLKRRRPPQPIQQPQRQRPRESYQMGHMRR) the chain is on the cytoplasmic side. Positions 704–748 (PSSNPKLPPPKPLPGTLKRRRPPQPIQQPQRQRPRESYQMGHMRR) are disordered. An SH3-binding motif is present at residues 708 to 715 (PKLPPPKP). Thr719 carries the post-translational modification Phosphothreonine; by FAM20C. The SH3-binding motif lies at 722-728 (RRRPPQP). The segment at 734-748 (RQRPRESYQMGHMRR) is interaction with AP2A1, AP2A2 and AP2M1.

In terms of assembly, forms a ternary EFNA5-EPHA3-ADAM10 complex mediating EFNA5 extracellular domain shedding by ADAM10 which regulates the EFNA5-EPHA3 complex internalization and function, the cleavage occurs in trans, with ADAM10 and its substrate being on the membranes of opposing cells. Interacts with the clathrin adapter AP2 complex subunits AP2A1, AP2A2, AP2B1, and AP2M1; this interaction facilitates ADAM10 endocytosis from the plasma membrane during long-term potentiation in hippocampal neurons. Forms a ternary complex composed of ADAM10, EPHA4 and CADH1; within the complex, ADAM10 cleaves CADH1 which disrupts adherens junctions. Interacts with EPHA2. Interacts with NGF in a divalent cation-dependent manner. Interacts with TSPAN14; the interaction promotes ADAM10 maturation and cell surface expression. Interacts with TSPAN5, TSPAN10, TSPAN14, TSPAN15, TSPAN17 and TSPAN33; these interactions regulate ADAM10 substrate specificity, endocytosis and turnover. Interacts (via extracellular domain) with TSPAN33 (via extracellular domain) and (via cytoplasmic domain) with AFDN; interaction with TSPAN33 allows the docking of ADAM10 to zonula adherens through a PDZ11-dependent interaction between TSPAN33 and PLEKHA7 while interaction with AFDN locks ADAM10 at zonula adherens. Interacts with DLG1; this interaction recruits ADAM10 to the cell membrane during long-term depression in hippocampal neurons. Interacts (via extracellular domain) with BACE1 (via extracellular domain). Interacts with FAM171A1. (Microbial infection) Interacts with S.aureus hly; this interaction is necessary for toxin pore formation, disruption of focal adhesions and S.aureus hly-mediated cytotoxicity. Zn(2+) serves as cofactor. The precursor is cleaved by furin and PCSK7. In terms of tissue distribution, expressed in the brain (at protein level). Expressed in spleen, lymph node, thymus, peripheral blood leukocyte, bone marrow, cartilage, chondrocytes and fetal liver.

The protein resides in the cell membrane. It localises to the golgi apparatus membrane. The protein localises to the cytoplasmic vesicle. Its subcellular location is the clathrin-coated vesicle. It is found in the cell projection. The protein resides in the axon. It localises to the dendrite. The protein localises to the cell junction. Its subcellular location is the adherens junction. It is found in the cytoplasm. The catalysed reaction is Endopeptidase of broad specificity.. With respect to regulation, catalytically inactive when the propeptide is intact and associated with the mature enzyme. The disintegrin and cysteine-rich regions modulate access of substrates to exerts an inhibitory effect on the cleavage of ADAM10 substrates. Its function is as follows. Transmembrane metalloprotease which mediates the ectodomain shedding of a myriad of transmembrane proteins, including adhesion proteins, growth factor precursors and cytokines being essential for development and tissue homeostasis. Associates with six members of the tetraspanin superfamily TspanC8 which regulate its exit from the endoplasmic reticulum and its substrate selectivity. Cleaves the membrane-bound precursor of TNF-alpha at '76-Ala-|-Val-77' to its mature soluble form. Responsible for the proteolytical release of soluble JAM3 from endothelial cells surface. Responsible for the proteolytic release of several other cell-surface proteins, including heparin-binding epidermal growth-like factor, ephrin-A2, CD44, CDH2 and for constitutive and regulated alpha-secretase cleavage of amyloid precursor protein (APP). Contributes to the normal cleavage of the cellular prion protein. Involved in the cleavage of the adhesion molecule L1 at the cell surface and in released membrane vesicles, suggesting a vesicle-based protease activity. Also controls the proteolytic processing of Notch and mediates lateral inhibition during neurogenesis. Required for the development of type 1 transitional B cells into marginal zone B cells, probably by cleaving Notch. Responsible for the FasL ectodomain shedding and for the generation of the remnant ADAM10-processed FasL (FasL APL) transmembrane form. Also cleaves the ectodomain of the integral membrane proteins CORIN and ITM2B. Mediates the proteolytic cleavage of LAG3, leading to release the secreted form of LAG3. Mediates the proteolytic cleavage of IL6R and IL11RA, leading to the release of secreted forms of IL6R and IL11RA. Enhances the cleavage of CHL1 by BACE1. Cleaves NRCAM. Cleaves TREM2, resulting in shedding of the TREM2 ectodomain. Involved in the development and maturation of glomerular and coronary vasculature. During development of the cochlear organ of Corti, promotes pillar cell separation by forming a ternary complex with CADH1 and EPHA4 and cleaving CADH1 at adherens junctions. May regulate the EFNA5-EPHA3 signaling. Regulates leukocyte transmigration as a sheddase for the adherens junction protein VE-cadherin/CDH5 in endothelial cells. (Microbial infection) Promotes the cytotoxic activity of S.aureus hly by binding to the toxin at zonula adherens and promoting formation of toxin pores. This Homo sapiens (Human) protein is Disintegrin and metalloproteinase domain-containing protein 10.